Consider the following 299-residue polypeptide: Probable lipid kinase YegS (299 aa).

A DAGKc domain is found at 2 to 133; sequence AEFPASLLIL…IDMAQVNKQT (132 aa). ATP contacts are provided by residues T40, 66–72, and T95; that span reads GDGTINE. The Mg(2+) site is built by L215, D218, and L220. Residue E271 is the Proton acceptor of the active site.

It belongs to the diacylglycerol/lipid kinase family. YegS lipid kinase subfamily. Mg(2+) is required as a cofactor. It depends on Ca(2+) as a cofactor.

The protein localises to the cytoplasm. Functionally, probably phosphorylates lipids; the in vivo substrate is unknown. The sequence is that of Probable lipid kinase YegS from Shigella dysenteriae serotype 1 (strain Sd197).